A 132-amino-acid chain; its full sequence is Small ribosomal subunit protein uS9 (132 aa).

Belongs to the universal ribosomal protein uS9 family.

The protein is Small ribosomal subunit protein uS9 of Leptospira interrogans serogroup Icterohaemorrhagiae serovar copenhageni (strain Fiocruz L1-130).